Here is a 128-residue protein sequence, read N- to C-terminus: Holin-like protein CidA (128 aa).

A run of 4 helical transmembrane segments spans residues 4–24 (LLLTVIQIALLFIFARLINWV), 26–46 (ALLHINIPGSIIGIVILFTLL), 59–79 (GAAWLLGELLLFFIPSAVGVI), and 88–108 (FGVSILLVVIISTFVVMVSTG).

Belongs to the CidA/LrgA family. CidA subfamily.

Its subcellular location is the cell membrane. Increases the activity of extracellular murein hydrolases possibly by mediating their export via hole formation. Inhibited by the antiholin-like proteins LrgAB. In an unstressed cell, the LrgAB products probably inhibit the function of the CidA protein. When a cell is stressed by the addition of antibiotics or by other factors in the environment, CidA possibly oligomerizes within the bacterial cell membrane, creating lesions that disrupt the proton motive force, which in turn results in loss of cell viability. These lesions are also hypothesized to regulate the subsequent cell lysis by either allowing the murein hydrolases access to the cell wall substrate and/or regulating their activity by a possible change in the cell wall pH that results from loss of membrane potential. The protein is Holin-like protein CidA of Bacillus subtilis (strain 168).